We begin with the raw amino-acid sequence, 77 residues long: Translation initiation factor IF-1, chloroplastic (77 aa).

The S1-like domain maps to 1–71 (MKEQKWIHEG…SRGRIIYRLR (71 aa)).

It belongs to the IF-1 family. As to quaternary structure, component of the 30S ribosomal translation pre-initiation complex which assembles on the 30S ribosome in the order IF-2 and IF-3, IF-1 and N-formylmethionyl-tRNA(fMet); mRNA recruitment can occur at any time during PIC assembly.

Its subcellular location is the plastid. It is found in the chloroplast. Functionally, one of the essential components for the initiation of protein synthesis. Stabilizes the binding of IF-2 and IF-3 on the 30S subunit to which N-formylmethionyl-tRNA(fMet) subsequently binds. Helps modulate mRNA selection, yielding the 30S pre-initiation complex (PIC). Upon addition of the 50S ribosomal subunit IF-1, IF-2 and IF-3 are released leaving the mature 70S translation initiation complex. The protein is Translation initiation factor IF-1, chloroplastic of Buxus microphylla (Littleleaf boxwood).